The primary structure comprises 105 residues: Saimiri transformation-associated protein (105 aa).

Residues 1 to 75 are Cytoplasmic-facing; the sequence is MASEPNLRYP…GPPGPSGLPG (75 aa). The disordered stretch occupies residues 1 to 75; the sequence is MASEPNLRYP…GPPGPSGLPG (75 aa). One can recognise a Collagen-like domain in the interval 15-74; the sequence is GDRGPQGPPGPPGPQGPPGPQGPPGPQGPPGPQGPPGPQGPPGPQGPPGPPGPPGPSGLP. Pro residues predominate over residues 20–71; it reads QGPPGPPGPQGPPGPQGPPGPQGPPGPQGPPGPQGPPGPQGPPGPPGPPGPS. The chain crosses the membrane as a helical span at residues 76–96; the sequence is LFVTNLLLGIIILLLLIIVAI. Residues 97–105 lie on the Extracellular side of the membrane; it reads LLVSKLVVN.

As to quaternary structure, binds to host RAS and TRAF2.

It localises to the host membrane. Acts synergistically with Tip to stimulate NF-kappa-B activity and interleukin-2 gene expression by binding to host TRAF proteins. Activation of NF-kappa-B protects lymphocytes from apoptosis, thereby facilitating viral induced cell transformation. This chain is Saimiri transformation-associated protein, found in Saimiriine herpesvirus 2 (strain 484-77) (SaHV-2).